The sequence spans 890 residues: MSQGILSPPAGLLSDDDVVVSPMFESTAADLGSVVRKNLLSDCSVVSTSLEDKQQVPSEDSMEKVKVYLRVRPLLPSELERQEDQGCVRIENVETLVLQAPKDSFALKSNERGIGQATHRFTFSQIFGPEVGQASFFNLTVKEMVKDVLKGQNWLIYTYGVTNSGKTHTIQGTIKDGGILPRSLALIFNSLQGQLHPTPDLKPLLSNEVIWLDSKQIRQEEMKKLSLLNGGLQEEELSTSLKRSVYIESRIGTSTSFDSGIAGLSSISQCTSSSQLDETSHRWAQPDTAPLPVPANIRFSIWISFFEIYNELLYDLLEPPSQQRKRQTLRLCEDQNGNPYVKDLNWIHVQDAEEAWKLLKVGRKNQSFASTHLNQNSSRSHSIFSIRILHLQGEGDIVPKISELSLCDLAGSERCKDQKSGERLKEAGNINTSLHTLGRCIAALRQNQQNRSKQNLVPFRDSKLTRVFQGFFTGRGRSCMIVNVNPCASTYDETLHVAKFSAIASQLVHAPPMQLGFPSLHSFIKEHSLQVSPSLEKGAKADTGLDDDIENEADISMYGKEELLQVVEAMKTLLLKERQEKLQLEMHLRDEICNEMVEQMQQREQWCSEHLDTQKELLEEMYEEKLNILKESLTSFYQEEIQERDEKIEELEALLQEARQQSVAHQQSGSELALRRSQRLAASASTQQLQEVKAKLQQCKAELNSTTEELHKYQKMLEPPPSAKPFTIDVDKKLEEGQKNIRLLRTELQKLGESLQSAERACCHSTGAGKLRQALTTCDDILIKQDQTLAELQNNMVLVKLDLRKKAACIAEQYHTVLKLQGQVSAKKRLGTNQENQQPNQQPPGKKPFLRNLLPRTPTCQSSTDCSPYARILRSRRSPLLKSGPFGKKY.

The residue at position 2 (Ser-2) is an N-acetylserine. Residues Ser-7, Ser-14, and Ser-21 each carry the phosphoserine modification. The region spanning 64–507 (KVKVYLRVRP…AKFSAIASQL (444 aa)) is the Kinesin motor domain. 160–167 (GVTNSGKT) lines the ATP pocket. Residue Ser-528 is modified to Phosphoserine; by PLK1. 5 positions are modified to phosphoserine: Ser-532, Ser-662, Ser-668, Ser-685, and Ser-825. Residues 611–762 (LDTQKELLEE…ESLQSAERAC (152 aa)) are a coiled coil. Positions 763-890 (CHSTGAGKLR…LKSGPFGKKY (128 aa)) are globular. A disordered region spans residues 832-865 (TNQENQQPNQQPPGKKPFLRNLLPRTPTCQSSTD). Thr-857 carries the phosphothreonine modification. Residues Ser-867, Ser-878, and Ser-883 each carry the phosphoserine modification.

This sequence belongs to the TRAFAC class myosin-kinesin ATPase superfamily. Kinesin family. Phosphorylated by PLK1 at Ser-528 during mitosis, creating a docking site for PLK1 and recruiting PLK1 at central spindle.

The protein localises to the golgi apparatus. Its subcellular location is the cytoplasm. The protein resides in the cytoskeleton. It localises to the spindle. In terms of biological role, mitotic kinesin required for chromosome passenger complex (CPC)-mediated cytokinesis. Following phosphorylation by PLK1, involved in recruitment of PLK1 to the central spindle. Interacts with guanosine triphosphate (GTP)-bound forms of RAB6A and RAB6B. May act as a motor required for the retrograde RAB6 regulated transport of Golgi membranes and associated vesicles along microtubules. Has a microtubule plus end-directed motility. The sequence is that of Kinesin-like protein KIF20A (KIF20A) from Homo sapiens (Human).